Consider the following 125-residue polypeptide: Holo-[acyl-carrier-protein] synthase (125 aa).

Mg(2+)-binding residues include aspartate 8 and glutamate 57.

This sequence belongs to the P-Pant transferase superfamily. AcpS family. The cofactor is Mg(2+).

It is found in the cytoplasm. It catalyses the reaction apo-[ACP] + CoA = holo-[ACP] + adenosine 3',5'-bisphosphate + H(+). Functionally, transfers the 4'-phosphopantetheine moiety from coenzyme A to a Ser of acyl-carrier-protein. The sequence is that of Holo-[acyl-carrier-protein] synthase from Dechloromonas aromatica (strain RCB).